The primary structure comprises 452 residues: Mitochondrial distribution and morphology protein 10 (452 aa).

This sequence belongs to the MDM10 family. In terms of assembly, component of the ER-mitochondria encounter structure (ERMES) or MDM complex, composed of MMM1, MDM10, MDM12 and MDM34. Associates with the mitochondrial outer membrane sorting assembly machinery SAM(core) complex.

The protein localises to the mitochondrion outer membrane. Functionally, component of the ERMES/MDM complex, which serves as a molecular tether to connect the endoplasmic reticulum and mitochondria. Components of this complex are involved in the control of mitochondrial shape and protein biogenesis and may function in phospholipid exchange. MDM10 is involved in the late assembly steps of the general translocase of the mitochondrial outer membrane (TOM complex). Functions in the TOM40-specific route of the assembly of outer membrane beta-barrel proteins, including the association of TOM40 with the receptor TOM22 and small TOM proteins. Can associate with the SAM(core) complex as well as the MDM12-MMM1 complex, both involved in late steps of the major beta-barrel assembly pathway, that is responsible for biogenesis of all outer membrane beta-barrel proteins. May act as a switch that shuttles between both complexes and channels precursor proteins into the TOM40-specific pathway. Plays a role in mitochondrial morphology and in the inheritance of mitochondria. The chain is Mitochondrial distribution and morphology protein 10 from Kluyveromyces lactis (strain ATCC 8585 / CBS 2359 / DSM 70799 / NBRC 1267 / NRRL Y-1140 / WM37) (Yeast).